A 271-amino-acid chain; its full sequence is Ribosomal RNA small subunit methyltransferase J (271 aa).

Residues 116–117, 132–133, 168–169, and D190 each bind S-adenosyl-L-methionine; these read RD, ER, and SS.

It belongs to the methyltransferase superfamily. RsmJ family.

It localises to the cytoplasm. It carries out the reaction guanosine(1516) in 16S rRNA + S-adenosyl-L-methionine = N(2)-methylguanosine(1516) in 16S rRNA + S-adenosyl-L-homocysteine + H(+). Specifically methylates the guanosine in position 1516 of 16S rRNA. In Shewanella piezotolerans (strain WP3 / JCM 13877), this protein is Ribosomal RNA small subunit methyltransferase J.